Reading from the N-terminus, the 487-residue chain is N-succinylglutamate 5-semialdehyde dehydrogenase (487 aa).

221–226 (GSSDTG) is an NAD(+) binding site. Active-site residues include Glu-244 and Cys-278.

This sequence belongs to the aldehyde dehydrogenase family. AstD subfamily.

It catalyses the reaction N-succinyl-L-glutamate 5-semialdehyde + NAD(+) + H2O = N-succinyl-L-glutamate + NADH + 2 H(+). It participates in amino-acid degradation; L-arginine degradation via AST pathway; L-glutamate and succinate from L-arginine: step 4/5. Its function is as follows. Catalyzes the NAD-dependent reduction of succinylglutamate semialdehyde into succinylglutamate. The sequence is that of N-succinylglutamate 5-semialdehyde dehydrogenase from Burkholderia orbicola (strain MC0-3).